Consider the following 329-residue polypeptide: MNNHLILGVETSCDETSVAIVSEEGEVCFHEIFTQDHSKYNGVYPEFASREHLKILPQILRRAVQAHDLEKLTAIACTVGPGLVGSLIVGVMMARGLAFSLKKPVFGVNHLEGHLLAVRLVEKINFPFVCLVISGGHSQLIDARGIGDYVLLGETLDDAFGEAFDKLATMLGFTYPGGKTVEKLAIKGDSERFRLPAAMINQSGCNFSLSGIKTALKKIITSLPQITEKDKADICASFQACVARIMVNKLEQAVKICGHSRIVLAGGVGSNRYIRETLEEFAKNHNLSLHFPEGILCTDNAAMIAWAAIERLKAGCTELSLEPQPRLCW.

The Fe cation site is built by His110 and His114. Residues 132-136 (VISGG), Asp165, Gly178, and Asn271 contribute to the substrate site. Fe cation is bound at residue Asp299.

Belongs to the KAE1 / TsaD family. It depends on Fe(2+) as a cofactor.

It localises to the cytoplasm. The enzyme catalyses L-threonylcarbamoyladenylate + adenosine(37) in tRNA = N(6)-L-threonylcarbamoyladenosine(37) in tRNA + AMP + H(+). Required for the formation of a threonylcarbamoyl group on adenosine at position 37 (t(6)A37) in tRNAs that read codons beginning with adenine. Is involved in the transfer of the threonylcarbamoyl moiety of threonylcarbamoyl-AMP (TC-AMP) to the N6 group of A37, together with TsaE and TsaB. TsaD likely plays a direct catalytic role in this reaction. This is tRNA N6-adenosine threonylcarbamoyltransferase from Neorickettsia sennetsu (strain ATCC VR-367 / Miyayama) (Ehrlichia sennetsu).